Consider the following 505-residue polypeptide: Phosphoglycerate kinase, glycosomal (505 aa).

13 residues coordinate (2R)-3-phosphoglycerate: Val29, Asp30, Phe31, Asn32, Arg45, Ser67, His68, Gly70, Arg71, Leu219, Arg220, His256, and Arg257. ADP is bound by residues Gly302 and Ala303. Gly302 provides a ligand contact to CDP. Ala303 and Lys304 together coordinate AMP. Ala303 contributes to the ATP binding site. Ala303 provides a ligand contact to Mg(2+). A (2R)-3-phosphoglycerate-binding site is contributed by Lys304. Asp307 contacts CDP. Asp307 serves as a coordination point for Mg(2+). 2 residues coordinate ADP: Lys308 and Gly326. Position 308 (Lys308) interacts with AMP. Lys308 is an ATP binding site. Gly326 lines the CDP pocket. AMP contacts are provided by Gly327 and Gly399. ATP is bound by residues Gly327 and Gly399. Residues Gly399 and Asn423 each contribute to the ADP site. Positions 424, 426, and 429 each coordinate CDP. Residues Phe429, Glu430, Asp462, and Thr463 each contribute to the ADP site. An AMP-binding site is contributed by Glu430. Glu430, Asp462, and Thr463 together coordinate ATP. Asp462 contacts Mg(2+).

Belongs to the phosphoglycerate kinase family. Monomer. It depends on Mg(2+) as a cofactor.

The protein resides in the glycosome. It catalyses the reaction (2R)-3-phosphoglycerate + ATP = (2R)-3-phospho-glyceroyl phosphate + ADP. It functions in the pathway carbohydrate degradation; glycolysis; pyruvate from D-glyceraldehyde 3-phosphate: step 2/5. The sequence is that of Phosphoglycerate kinase, glycosomal (PGKA) from Crithidia fasciculata.